Here is an 881-residue protein sequence, read N- to C-terminus: Cell wall protein PRY3 (881 aa).

The N-terminal stretch at 1–18 (MLEFPISVLLGCLVAVKA) is a signal peptide. One can recognise an SCP domain in the interval 30–144 (LNEHNKFRAL…TWNNYIVCSY (115 aa)). The N-linked (GlcNAc...) asparagine glycan is linked to N101. Residues 262 to 313 (VVSSDATSSTTTTSSVATSSSTTSSDPTSSTAAASSSDPASSSAAASSSAST) are disordered. Residue N360 is glycosylated (N-linked (GlcNAc...) asparagine). Disordered stretches follow at residues 381-400 (AADD…VSEH) and 453-494 (VSST…NSAA). Positions 386–400 (QGSTSKEATSSVSEH) are enriched in polar residues. N-linked (GlcNAc...) asparagine glycosylation is found at N488, N535, N547, and N569. A disordered region spans residues 579–611 (IDPTLDPTDNSASPTDNAKHTSTYGSSSTGASL). Positions 585–594 (PTDNSASPTD) are enriched in polar residues. A compositionally biased stretch (low complexity) spans 599-611 (TSTYGSSSTGASL). The N-linked (GlcNAc...) asparagine glycan is linked to N625. Disordered regions lie at residues 758–788 (LASD…TTTT) and 800–830 (PSST…MHQP). Composition is skewed to low complexity over residues 776 to 788 (STSN…TTTT) and 808 to 820 (RTTT…STTS). Residues 821 to 830 (QQDGSAMHQP) show a composition bias toward polar residues. A lipid anchor (GPI-anchor amidated glycine) is attached at G853. Positions 854 to 881 (AATPLSIFQCNSLAGTIAAFVVAVLFAF) are cleaved as a propeptide — removed in mature form.

It belongs to the CRISP family. Post-translationally, the GPI-anchor is attached to the protein in the endoplasmic reticulum and serves to target the protein to the cell surface. There, the glucosamine-inositol phospholipid moiety is cleaved off and the GPI-modified mannoprotein is covalently attached via its lipidless GPI glycan remnant to the 1,6-beta-glucan of the outer cell wall layer.

The protein resides in the secreted. The protein localises to the cell wall. Its subcellular location is the membrane. Its function is as follows. The full-length isoform (isoform Long) is a daughter cell-specific cell wall protein required for efficient export of lipids such as acetylated sterols. Acts in detoxification of hydrophobic compounds. Involved in tolerance to organic solvents such as dimethyl sulfoxide (DMSO). Also plays a role as an inhibitor of mating. STE12 is utilized as a repressor of full-length PRY3 transcription, ensuring efficient mating. Functionally, there is no evidence that production of the short PRY3 transcript (isoform Short) is anything more than an adventitious by-product of the mechanism responsible for the repression of the full-length transcript. Moreover, no disadvantage is detectable for cells unable to make the short transcript. This Saccharomyces cerevisiae (strain ATCC 204508 / S288c) (Baker's yeast) protein is Cell wall protein PRY3 (PRY3).